The chain runs to 338 residues: Glycerol-3-phosphate dehydrogenase [NAD(P)+] (338 aa).

Serine 13, tryptophan 14, and lysine 108 together coordinate NADPH. Sn-glycerol 3-phosphate is bound by residues lysine 108, glycine 139, and serine 141. Position 143 (alanine 143) interacts with NADPH. Positions 194, 247, 257, 258, and 259 each coordinate sn-glycerol 3-phosphate. Lysine 194 functions as the Proton acceptor in the catalytic mechanism. Arginine 258 is a binding site for NADPH. The NADPH site is built by valine 282 and glutamate 284.

Belongs to the NAD-dependent glycerol-3-phosphate dehydrogenase family.

The protein localises to the cytoplasm. The enzyme catalyses sn-glycerol 3-phosphate + NAD(+) = dihydroxyacetone phosphate + NADH + H(+). It catalyses the reaction sn-glycerol 3-phosphate + NADP(+) = dihydroxyacetone phosphate + NADPH + H(+). The protein operates within membrane lipid metabolism; glycerophospholipid metabolism. Functionally, catalyzes the reduction of the glycolytic intermediate dihydroxyacetone phosphate (DHAP) to sn-glycerol 3-phosphate (G3P), the key precursor for phospholipid synthesis. The chain is Glycerol-3-phosphate dehydrogenase [NAD(P)+] from Streptococcus pyogenes serotype M12 (strain MGAS9429).